Here is a 3412-residue protein sequence, read N- to C-terminus: Genome polyprotein (3412 aa).

A disordered region spans residues 1–30; it reads MAGKAILKGKGGGPPRRVSKETAKKTRQSR. At 1–98 the chain is on the cytoplasmic side; it reads MAGKAILKGK…LQRRGKRRSA (98 aa). A propeptide spans 97-117 (ER anchor for the capsid protein C, removed in mature form by serine protease NS3); it reads SAVDWTGWLLVVVLLGVTLAA. A helical transmembrane segment spans residues 99 to 119; sequence VDWTGWLLVVVLLGVTLAATV. The Extracellular segment spans residues 120-242; that stretch reads RKERDGTTVI…HLTRVEGWVW (123 aa). N-linked (GlcNAc...) asparagine; by host glycosylation is present at Asn-144. The chain crosses the membrane as a helical span at residues 243–260; sequence KNKVLTLAVIAVVWLTVE. A topological domain (cytoplasmic) is located at residue Ser-261. A helical membrane pass occupies residues 262 to 280; the sequence is VVTRVAVVVVLLCLAPVYA. Over 281–727 the chain is Extracellular; the sequence is SRCTHLENRD…HTVLGGAFNS (447 aa). Disulfide bonds link Cys-283–Cys-310, Cys-340–Cys-396, Cys-340–Cys-401, Cys-354–Cys-385, Cys-372–Cys-396, and Cys-372–Cys-401. Residues 378-391 are fusion peptide; it reads DRGWGNHCGLFGKG. An N-linked (GlcNAc...) asparagine; by host glycan is attached at Asn-434. Disulfide bonds link Cys-466–Cys-570 and Cys-587–Cys-618. A helical transmembrane segment spans residues 728–748; that stretch reads LFGGVGFLPKILVGVVLAWLG. The Cytoplasmic segment spans residues 749 to 755; the sequence is LNMRNPT. A helical transmembrane segment spans residues 756-776; sequence MSMSFLLAGGLVLAMTLGVGA. The Extracellular segment spans residues 777 to 1187; that stretch reads DVGCAVDTER…LVKIESLVRY (411 aa). Intrachain disulfides connect Cys-780-Cys-791, Cys-831-Cys-920, Cys-955-Cys-1000, Cys-1057-Cys-1106, Cys-1068-Cys-1090, and Cys-1089-Cys-1093. Asn-861, Asn-983, and Asn-999 each carry an N-linked (GlcNAc...) asparagine; by host glycan. A helical transmembrane segment spans residues 1188–1208; that stretch reads VVAVGITFHLELGPEIVALTL. The Cytoplasmic segment spans residues 1209-1236; it reads LQAVFELRVGLLSAFALRSNLTVREMVT. Residues 1237–1257 form a helical membrane-spanning segment; it reads IYFLLLVLELGLPSEGLGALW. The Lumenal portion of the chain corresponds to 1258–1293; it reads KWGDALAMGALIFRACTAEEKTGVGLLLMALMTQQD. A helical transmembrane segment spans residues 1294 to 1314; sequence LATVHYGLMLFLGVASCCSIW. The Cytoplasmic portion of the chain corresponds to 1315–1327; that stretch reads KLIRGHREQKGLT. Residues 1328 to 1348 form a helical membrane-spanning segment; that stretch reads WIVPLAGLLGGEGSGVRLVAF. At 1349 to 1359 the chain is on the cytoplasmic side; sequence WELTVHGRRRS. The chain crosses the membrane as a helical span at residues 1360–1378; that stretch reads FSEPLTVVGVMLTLASGMI. Residues 1379–1382 lie on the Lumenal side of the membrane; sequence RHTS. Residues 1383 to 1403 traverse the membrane as a helical segment; that stretch reads QEALCALAVASFLLLMLVLGT. The Cytoplasmic portion of the chain corresponds to 1404-1454; that stretch reads RKMQLVAEWSGCVEWHPELMNEGGEVSLRVRQDSMGNFHLTELEKEERVMA. Residues 1410–1449 form an interacts with and activates NS3 protease region; that stretch reads AEWSGCVEWHPELMNEGGEVSLRVRQDSMGNFHLTELEKE. Positions 1455 to 1475 form an intramembrane region, helical; it reads FWLLAGLAASAFHWSGILGVM. Over 1476 to 2160 the chain is Cytoplasmic; the sequence is GLWTLSEMLR…KMAERDAPEA (685 aa). Residues 1490–1669 enclose the Peptidase S7 domain; sequence SGLVFSGQGG…EAEKSRPNLP (180 aa). Residues His-1543, Asp-1567, and Ser-1627 each act as charge relay system; for serine protease NS3 activity in the active site. One can recognise a Helicase ATP-binding domain in the interval 1675–1831; that stretch reads TGWTAKGQIT…ESNGAISSEE (157 aa). 1688 to 1695 serves as a coordination point for ATP; sequence MHPGSGKT. The short motif at 1779 to 1782 is the DEAH box element; the sequence is DEAH. In terms of domain architecture, Helicase C-terminal spans 1841 to 2000; the sequence is DGFDWITEYE…TLRGPVATFY (160 aa). At Lys-1883 the chain carries N6-acetyllysine; by host. The chain crosses the membrane as a helical span at residues 2161–2181; sequence FLTVVEMMVLGLATLGVVWCF. At 2182 to 2189 the chain is on the lumenal side; sequence VVRTSISR. An intramembrane region (helical) is located at residues 2190–2210; it reads MMLGTLVLLASLALLWAGGVS. A topological domain (lumenal) is located at residue Tyr-2211. A helical membrane pass occupies residues 2212–2232; it reads GNMAGVALIFYTLLTVLQPEA. At 2233-2244 the chain is on the cytoplasmic side; sequence GKQRSSDDNKLA. The chain crosses the membrane as a helical span at residues 2245–2265; it reads YFLLTLCSLAGLVAANEMGFL. The Lumenal segment spans residues 2266-2299; that stretch reads EKTKADLSTVLWSEHEELRSWEEWTNIDIQPARS. An intramembrane region (helical) is located at residues 2300–2320; sequence WGTYVLVVSLFTPYIIHQLQT. Residues 2321–2343 are Lumenal-facing; that stretch reads KIQQLVNSAVATGAQAMRDLGGG. Residues 2344-2364 constitute an intramembrane region (helical); the sequence is APFFGVAGHVMALGVVSLVGA. At 2365 to 2368 the chain is on the lumenal side; it reads TPTS. A helical membrane pass occupies residues 2369–2389; the sequence is LVVGVGLAAFHLAIVVSGLEA. Topologically, residues 2390 to 2430 are cytoplasmic; it reads ELTQRAHKVFFSAMVRNPMVDGDVINPFGEGEAKPALYERK. Residues 2431 to 2451 traverse the membrane as a helical segment; sequence MSLVLAIVLCLMSVVMNRTVP. At 2452–2476 the chain is on the lumenal side; that stretch reads STPRLLLWDWRQRDNCSNQRRTPFG. A helical membrane pass occupies residues 2477-2497; the sequence is RCQACGLSGVVRGSLWGFCPL. Topologically, residues 2498-3412 are cytoplasmic; that stretch reads GHRLWLRASG…WESKLESSII (915 aa). The mRNA cap 0-1 NS5-type MT domain maps to 2511–2775; the sequence is GGSEGDTLGD…ELDLGVGTRC (265 aa). An S-adenosyl-L-methionine-binding site is contributed by Ser-2566. Ser-2566 is subject to Phosphoserine. Lys-2571 (for 2'-O-MTase activity) is an active-site residue. 5 residues coordinate S-adenosyl-L-methionine: Gly-2596, Trp-2597, Ile-2615, Asp-2641, and Val-2642. Asp-2656 acts as the For 2'-O-MTase activity in catalysis. Ile-2657 contacts S-adenosyl-L-methionine. Residues Lys-2693 and Glu-2729 each act as for 2'-O-MTase activity in the active site. Residues 2729 to 2733 are interaction with host SCRIB; it reads EMYYS. An S-adenosyl-L-methionine-binding site is contributed by Tyr-2731. The Zn(2+) site is built by Glu-2948, His-2952, Cys-2957, and Cys-2960. One can recognise a RdRp catalytic domain in the interval 3038 to 3187; the sequence is GLFYADDTAG…RPVDDRFSGA (150 aa). The Zn(2+) site is built by His-3222, Cys-3238, and Cys-3357.

This sequence in the N-terminal section; belongs to the class I-like SAM-binding methyltransferase superfamily. mRNA cap 0-1 NS5-type methyltransferase family. Homodimer. Interacts (via N-terminus) with host EXOC1 (via C-terminus); this interaction results in EXOC1 degradation through the proteasome degradation pathway. In terms of assembly, forms heterodimers with envelope protein E in the endoplasmic reticulum and Golgi. As to quaternary structure, homodimer; in the endoplasmic reticulum and Golgi. Interacts with protein prM. Interacts with non-structural protein 1. Homodimer; Homohexamer when secreted. Interacts with envelope protein E. In terms of assembly, interacts (via N-terminus) with serine protease NS3. As to quaternary structure, forms a heterodimer with serine protease NS3. May form homooligomers. Forms a heterodimer with NS2B. Interacts with non-structural protein 2A (via N-terminus). Interacts with NS4B. Interacts with unphosphorylated RNA-directed RNA polymerase NS5; this interaction stimulates RNA-directed RNA polymerase NS5 guanylyltransferase activity. In terms of assembly, interacts with serine protease NS3. Interacts with NS1. As to quaternary structure, homodimer. Interacts with host STAT2; this interaction inhibits the phosphorylation of the latter, and, when all viral proteins are present (polyprotein), targets STAT2 for degradation. Interacts with serine protease NS3. Interacts with host SCRIB; this interaction targets NS5 to the cell membrane periphery and nucleus, thereby allowing efficient host nuclear STAT1 inhibition. Post-translationally, specific enzymatic cleavages in vivo yield mature proteins. Cleavages in the lumen of endoplasmic reticulum are performed by host signal peptidase, whereas cleavages in the cytoplasmic side are performed by serine protease NS3. Signal cleavage at the 2K-4B site requires a prior NS3 protease-mediated cleavage at the 4A-2K site. Cleaved in post-Golgi vesicles by a host furin, releasing the mature small envelope protein M, and peptide pr. This cleavage is incomplete as up to 30% of viral particles still carry uncleaved prM. In terms of processing, N-glycosylated. Post-translationally, N-glycosylated. The excreted form is glycosylated and this is required for efficient secretion of the protein from infected cells. Acetylated by host KAT5. Acetylation modulates NS3 RNA-binding and unwinding activities and plays an important positive role for viral replication. In terms of processing, phosphorylated on serines residues. This phosphorylation may trigger NS5 nuclear localization.

Its subcellular location is the virion. It localises to the host nucleus. The protein localises to the host cytoplasm. The protein resides in the host perinuclear region. It is found in the secreted. Its subcellular location is the virion membrane. It localises to the host endoplasmic reticulum membrane. The enzyme catalyses Selective hydrolysis of -Xaa-Xaa-|-Yaa- bonds in which each of the Xaa can be either Arg or Lys and Yaa can be either Ser or Ala.. It carries out the reaction RNA(n) + a ribonucleoside 5'-triphosphate = RNA(n+1) + diphosphate. The catalysed reaction is a ribonucleoside 5'-triphosphate + H2O = a ribonucleoside 5'-diphosphate + phosphate + H(+). It catalyses the reaction ATP + H2O = ADP + phosphate + H(+). The enzyme catalyses a 5'-end (5'-triphosphoguanosine)-ribonucleoside in mRNA + S-adenosyl-L-methionine = a 5'-end (N(7)-methyl 5'-triphosphoguanosine)-ribonucleoside in mRNA + S-adenosyl-L-homocysteine. It carries out the reaction a 5'-end (N(7)-methyl 5'-triphosphoguanosine)-ribonucleoside in mRNA + S-adenosyl-L-methionine = a 5'-end (N(7)-methyl 5'-triphosphoguanosine)-(2'-O-methyl-ribonucleoside) in mRNA + S-adenosyl-L-homocysteine + H(+). Its function is as follows. Plays a role in virus budding by binding to the cell membrane and gathering the viral RNA into a nucleocapsid that forms the core of a mature virus particle. During virus entry, may induce genome penetration into the host cytoplasm after hemifusion induced by the surface proteins. Can migrate to the cell nucleus where it modulates host functions. Functionally, inhibits RNA silencing by interfering with host Dicer. In terms of biological role, prevents premature fusion activity of envelope proteins in trans-Golgi by binding to envelope protein E at pH6.0. After virion release in extracellular space, gets dissociated from E dimers. Acts as a chaperone for envelope protein E during intracellular virion assembly by masking and inactivating envelope protein E fusion peptide. prM is the only viral peptide matured by host furin in the trans-Golgi network probably to avoid catastrophic activation of the viral fusion activity in acidic Golgi compartment prior to virion release. prM-E cleavage is inefficient, and many virions are only partially matured. These uncleaved prM would play a role in immune evasion. Its function is as follows. May play a role in virus budding. Exerts cytotoxic effects by activating a mitochondrial apoptotic pathway through M ectodomain. May display a viroporin activity. Functionally, binds to host cell surface receptor and mediates fusion between viral and cellular membranes. Envelope protein is synthesized in the endoplasmic reticulum in the form of heterodimer with protein prM. They play a role in virion budding in the ER, and the newly formed immature particle is covered with 60 spikes composed of heterodimer between precursor prM and envelope protein E. The virion is transported to the Golgi apparatus where the low pH causes dissociation of PrM-E heterodimers and formation of E homodimers. prM-E cleavage is inefficient, and many virions are only partially matured. These uncleaved prM would play a role in immune evasion. In terms of biological role, involved in immune evasion, pathogenesis and viral replication. Once cleaved off the polyprotein, is targeted to three destinations: the viral replication cycle, the plasma membrane and the extracellular compartment. Essential for viral replication. Required for formation of the replication complex and recruitment of other non-structural proteins to the ER-derived membrane structures. Excreted as a hexameric lipoparticle that plays a role against host immune response. Antagonizing the complement function. Binds to the host macrophages and dendritic cells. Inhibits signal transduction originating from Toll-like receptor 3 (TLR3). Component of the viral RNA replication complex that functions in virion assembly and antagonizes the host immune response. Its function is as follows. Required cofactor for the serine protease function of NS3. May have membrane-destabilizing activity and form viroporins. Functionally, displays three enzymatic activities: serine protease, NTPase and RNA helicase. NS3 serine protease, in association with NS2B, performs its autocleavage and cleaves the polyprotein at dibasic sites in the cytoplasm: C-prM, NS2A-NS2B, NS2B-NS3, NS3-NS4A, NS4A-2K and NS4B-NS5. NS3 RNA helicase binds RNA and unwinds dsRNA in the 3' to 5' direction. In terms of biological role, regulates the ATPase activity of the NS3 helicase activity. NS4A allows NS3 helicase to conserve energy during unwinding. Functions as a signal peptide for NS4B and is required for the interferon antagonism activity of the latter. Its function is as follows. Induces the formation of ER-derived membrane vesicles where the viral replication takes place. Inhibits interferon (IFN)-induced host STAT1 phosphorylation and nuclear translocation, thereby preventing the establishment of cellular antiviral state by blocking the IFN-alpha/beta pathway. Inhibits STAT2 translocation in the nucleus after IFN-alpha treatment. Functionally, replicates the viral (+) and (-) genome, and performs the capping of genomes in the cytoplasm. NS5 methylates viral RNA cap at guanine N-7 and ribose 2'-O positions. Besides its role in RNA genome replication, also prevents the establishment of cellular antiviral state by blocking the interferon-alpha/beta (IFN-alpha/beta) signaling pathway. Inhibits host TYK2 and STAT2 phosphorylation, thereby preventing activation of JAK-STAT signaling pathway. This chain is Genome polyprotein, found in Homo sapiens (Human).